Here is a 161-residue protein sequence, read N- to C-terminus: Nucleotide-binding protein Pnuc_0290 (161 aa).

This sequence belongs to the YajQ family.

Nucleotide-binding protein. The polypeptide is Nucleotide-binding protein Pnuc_0290 (Polynucleobacter asymbioticus (strain DSM 18221 / CIP 109841 / QLW-P1DMWA-1) (Polynucleobacter necessarius subsp. asymbioticus)).